Reading from the N-terminus, the 320-residue chain is Malate dehydrogenase (320 aa).

NAD(+) is bound by residues 10–15 and D34; that span reads GSGMIG. Residues R83 and R89 each contribute to the substrate site. Residues N96 and 119-121 contribute to the NAD(+) site; that span reads ITN. Substrate contacts are provided by N121 and R152. Catalysis depends on H176, which acts as the Proton acceptor.

Belongs to the LDH/MDH superfamily. MDH type 3 family.

The catalysed reaction is (S)-malate + NAD(+) = oxaloacetate + NADH + H(+). Its function is as follows. Catalyzes the reversible oxidation of malate to oxaloacetate. This is Malate dehydrogenase from Brucella anthropi (strain ATCC 49188 / DSM 6882 / CCUG 24695 / JCM 21032 / LMG 3331 / NBRC 15819 / NCTC 12168 / Alc 37) (Ochrobactrum anthropi).